The following is a 399-amino-acid chain: Octopine dehydrogenase (399 aa).

Residues 10–13 (GGNG) and 35–38 (FADE) contribute to the NADH site. Pyruvate-binding residues include Gln-118 and Thr-143. Gln-118 serves as a coordination point for substrate. An NAD(+)-binding site is contributed by Cys-148. Met-206 provides a ligand contact to L-arginine. Residue His-212 participates in pyruvate binding. Residue His-212 is part of the active site. Arg-324 contacts NAD(+).

The protein belongs to the lysopine/nopaline/octopine/opine/vitopine dehydrogenases family.

The catalysed reaction is D-octopine + NAD(+) + H2O = L-arginine + pyruvate + NADH + H(+). Agmatine acts as a competitive inhibitor of the condensation reaction where the L-arginine and agmatine substrates compete for the same site. In terms of biological role, catalyzes the reverse reaction of octopine dehydrogenation. Acts on L-arginine in preference to other substrates such as canavanine, cysteine, L-alanine, ornithine or norvaline, owing to the presence of the positively charged guanidium group. This is Octopine dehydrogenase from Pecten maximus (King scallop).